An 850-amino-acid polypeptide reads, in one-letter code: Pentatricopeptide repeat-containing protein At5g16860 (850 aa).

17 PPR repeats span residues Thr58–Ser88, Gly91–Pro125, Asp126–Ser160, Asn161–Trp191, Asp192–Pro227, Asp228–Gln262, Asn263–Lys293, Asp294–Met328, Asp329–Pro363, Asn364–Leu398, Glu406–Lys436, Asp439–Thr473, Asn476–Ala510, Pro512–Lys542, Asn543–Leu577, Asp578–Val608, and Gly614–Glu644. Residues Val649–Ile724 are type E motif. The type E(+) motif stretch occupies residues Lys725–Lys755. Positions Asp756 to Trp850 are type DYW motif.

It belongs to the PPR family. PCMP-H subfamily.

In Arabidopsis thaliana (Mouse-ear cress), this protein is Pentatricopeptide repeat-containing protein At5g16860 (PCMP-H92).